The sequence spans 177 residues: Nucleoside triphosphate/diphosphate phosphatase (177 aa).

Residue Arg23 is the Proton donor of the active site. Asn87, Asp103, Asp105, Asp107, Asp120, and Glu123 together coordinate Mg(2+).

Belongs to the Ntdp family. The cofactor is Mg(2+).

It carries out the reaction a ribonucleoside 5'-triphosphate + H2O = a ribonucleoside 5'-diphosphate + phosphate + H(+). The enzyme catalyses a ribonucleoside 5'-diphosphate + H2O = a ribonucleoside 5'-phosphate + phosphate + H(+). Functionally, has nucleoside phosphatase activity towards nucleoside triphosphates and nucleoside diphosphates. This is Nucleoside triphosphate/diphosphate phosphatase from Streptococcus pneumoniae (strain ATCC 700669 / Spain 23F-1).